Consider the following 158-residue polypeptide: ATP synthase subunit beta, mitochondrial (158 aa).

It belongs to the ATPase alpha/beta chains family. F-type ATPases have 2 components, CF(1) - the catalytic core - and CF(0) - the membrane proton channel. CF(1) has five subunits: alpha(3), beta(3), gamma(1), delta(1), epsilon(1). CF(0) has three main subunits: a, b and c.

Its subcellular location is the mitochondrion. It is found in the mitochondrion inner membrane. The catalysed reaction is ATP + H2O + 4 H(+)(in) = ADP + phosphate + 5 H(+)(out). Functionally, mitochondrial membrane ATP synthase (F(1)F(0) ATP synthase or Complex V) produces ATP from ADP in the presence of a proton gradient across the membrane which is generated by electron transport complexes of the respiratory chain. F-type ATPases consist of two structural domains, F(1) - containing the extramembraneous catalytic core, and F(0) - containing the membrane proton channel, linked together by a central stalk and a peripheral stalk. During catalysis, ATP synthesis in the catalytic domain of F(1) is coupled via a rotary mechanism of the central stalk subunits to proton translocation. Subunits alpha and beta form the catalytic core in F(1). Rotation of the central stalk against the surrounding alpha(3)beta(3) subunits leads to hydrolysis of ATP in three separate catalytic sites on the beta subunits. This Schizaphis graminum (Green bug aphid) protein is ATP synthase subunit beta, mitochondrial.